Consider the following 459-residue polypeptide: UDP-N-acetylglucosamine 1-carboxyvinyltransferase (459 aa).

Position 40–41 (40–41 (KN)) interacts with phosphoenolpyruvate. Arg111 lines the UDP-N-acetyl-alpha-D-glucosamine pocket. The active-site Proton donor is the Cys135. Cys135 carries the post-translational modification 2-(S-cysteinyl)pyruvic acid O-phosphothioketal. UDP-N-acetyl-alpha-D-glucosamine contacts are provided by residues 140–144 (RPVDL), Asp324, and Val346. Positions 437 to 459 (PSAPPSEVSSAVAAGPDAAAAPV) are disordered. A compositionally biased stretch (low complexity) spans 441 to 459 (PSEVSSAVAAGPDAAAAPV).

This sequence belongs to the EPSP synthase family. MurA subfamily.

Its subcellular location is the cytoplasm. It catalyses the reaction phosphoenolpyruvate + UDP-N-acetyl-alpha-D-glucosamine = UDP-N-acetyl-3-O-(1-carboxyvinyl)-alpha-D-glucosamine + phosphate. Its pathway is cell wall biogenesis; peptidoglycan biosynthesis. Cell wall formation. Adds enolpyruvyl to UDP-N-acetylglucosamine. The sequence is that of UDP-N-acetylglucosamine 1-carboxyvinyltransferase from Gloeobacter violaceus (strain ATCC 29082 / PCC 7421).